Reading from the N-terminus, the 146-residue chain is Large ribosomal subunit protein uL13 (146 aa).

This sequence belongs to the universal ribosomal protein uL13 family. Part of the 50S ribosomal subunit.

In terms of biological role, this protein is one of the early assembly proteins of the 50S ribosomal subunit, although it is not seen to bind rRNA by itself. It is important during the early stages of 50S assembly. The sequence is that of Large ribosomal subunit protein uL13 from Mycoplasma pneumoniae (strain ATCC 29342 / M129 / Subtype 1) (Mycoplasmoides pneumoniae).